Consider the following 369-residue polypeptide: Microtubule-associated protein 6 homolog (369 aa).

Disordered stretches follow at residues 41–213 (LPAQ…AADA) and 251–369 (AQYK…EAKE). The segment covering 70–80 (APGPARPGTAP) has biased composition (low complexity). Mn stretches follow at residues 87–110 (DSVM…KPKS) and 122–145 (ETQY…WIPK). Composition is skewed to basic and acidic residues over residues 89 to 110 (VMRH…KPKS), 118 to 142 (PFEK…DHPW), and 179 to 209 (EHPK…RGRA). The interval 228–251 (SSSYRNEFRPWIDVKPVKAIKAKA) is mn 3. Residues 297–308 (PYKEPPKVEKPS) are compositionally biased toward basic and acidic residues. A compositionally biased stretch (basic residues) spans 312–328 (SKPKKTTTSHKPLKKAK). Positions 350-369 (KPEDKEKSKEMNNKLAEAKE) are enriched in basic and acidic residues.

This sequence belongs to the STOP family.

It is found in the cytoplasm. It localises to the cytoskeleton. Its function is as follows. Involved in microtubule stabilization in many cell types, including neuronal cells. Specifically has microtubule cold stabilizing activity. Involved in dendrite morphogenesis and maintenance by regulating lysosomal trafficking. The sequence is that of Microtubule-associated protein 6 homolog (MAP6) from Gallus gallus (Chicken).